The chain runs to 591 residues: Oxaloacetate decarboxylase alpha chain (591 aa).

Positions 3–263 (IAITDVVLRD…DTGLDILKLE (261 aa)) constitute a Pyruvate carboxyltransferase domain. Residues 518–591 (PAGAGTPVTA…SVGDTLMTLA (74 aa)) form the Biotinyl-binding domain. At lysine 557 the chain carries N6-biotinyllysine.

In terms of assembly, composed of three chains (alpha, beta, and gamma). Requires biotin as cofactor.

The enzyme catalyses oxaloacetate + 2 Na(+)(in) + H(+) = pyruvate + 2 Na(+)(out) + CO2. In terms of biological role, catalyzes the decarboxylation of oxaloacetate coupled to Na(+) translocation. The protein is Oxaloacetate decarboxylase alpha chain (oadA1) of Salmonella typhi.